The chain runs to 241 residues: Fatty acid metabolism regulator protein (241 aa).

One can recognise an HTH gntR-type domain in the interval 6 to 74 (KGPASFAEKY…HGKPTRVNNF (69 aa)). A DNA-binding region (H-T-H motif) is located at residues 34 to 53 (ERELSELIGVTRTTLREVLQ).

In terms of assembly, homodimer.

The protein localises to the cytoplasm. Functionally, multifunctional regulator of fatty acid metabolism. The chain is Fatty acid metabolism regulator protein from Shewanella sp. (strain ANA-3).